Reading from the N-terminus, the 236-residue chain is DNA repair protein RecO (236 aa).

This sequence belongs to the RecO family.

In terms of biological role, involved in DNA repair and RecF pathway recombination. The polypeptide is DNA repair protein RecO (Haemophilus influenzae (strain PittGG)).